The following is a 305-amino-acid chain: Protein ORANGE, chloroplastic (305 aa).

A chloroplast-targeting transit peptide spans 1–54; sequence MSCLGRILSVSYPPDPYGSRLSVSKLSSPGRNRRLRWRFTALDSDSSSLDSDSS. The next 2 helical transmembrane spans lie at 144 to 164 and 197 to 217; these read VYYA…GLLA and IVAS…VVEV. A CR-type-like region spans residues 206-297; the sequence is VGVISALMVV…CTGMAMASEH (92 aa). Residues 228–235 form a CXXCXGXG motif repeat; that stretch reads CKYCLGTG. A CXXCXXXG motif repeat occupies 239–246; that stretch reads CARCSSTG. A CXXCXGXG motif repeat occupies 272–279; sequence CSNCSGAG. A CXXCXXXG motif repeat occupies 283–290; that stretch reads CPTCLCTG.

This sequence belongs to the orange-like family. Interacts with ERF1-2. As to expression, expressed in young leaves, curds and flower buds.

It localises to the plastid. Its subcellular location is the chloroplast membrane. It is found in the nucleus. In terms of biological role, involved in chromoplast differentiation. Is associated with a cellular process that triggers the differentiation of pro-plastids or other non-colored plastids into chromoplasts for carotenoid accumulation. Associated with carotenoid accumulation in de-etiolated cotyledons. Controls leaf petiole elongation by suppressing the expression of ERF1 genes. This chain is Protein ORANGE, chloroplastic, found in Brassica oleracea var. botrytis (Cauliflower).